We begin with the raw amino-acid sequence, 116 residues long: Large ribosomal subunit protein bL20c (116 aa).

This sequence belongs to the bacterial ribosomal protein bL20 family.

The protein localises to the plastid. It is found in the chloroplast. Binds directly to 23S ribosomal RNA and is necessary for the in vitro assembly process of the 50S ribosomal subunit. It is not involved in the protein synthesizing functions of that subunit. The protein is Large ribosomal subunit protein bL20c of Cyanidioschyzon merolae (strain NIES-3377 / 10D) (Unicellular red alga).